The sequence spans 268 residues: Taurine import ATP-binding protein TauB (268 aa).

The region spanning 4–236 (LAIRNISMRF…EGVDADLREV (233 aa)) is the ABC transporter domain. Residue 41-48 (GPSGCGKT) coordinates ATP.

This sequence belongs to the ABC transporter superfamily. Taurine importer (TC 3.A.1.17.1) family. As to quaternary structure, the complex is composed of two ATP-binding proteins (TauB), two transmembrane proteins (TauC) and a solute-binding protein (TauA).

The protein resides in the cell inner membrane. The catalysed reaction is taurine(out) + ATP + H2O = taurine(in) + ADP + phosphate + H(+). In terms of biological role, part of the ABC transporter complex TauABC involved in taurine import. Responsible for energy coupling to the transport system. This chain is Taurine import ATP-binding protein TauB, found in Jannaschia sp. (strain CCS1).